A 525-amino-acid chain; its full sequence is Peptide chain release factor 3 (525 aa).

The region spanning 9 to 276 is the tr-type G domain; the sequence is AKRRTFAIIS…GFTRYAPAPQ (268 aa). GTP is bound by residues 18–25, 86–90, and 140–143; these read SHPDAGKT, DTPGH, and NKFD.

This sequence belongs to the TRAFAC class translation factor GTPase superfamily. Classic translation factor GTPase family. PrfC subfamily.

The protein localises to the cytoplasm. Functionally, increases the formation of ribosomal termination complexes and stimulates activities of RF-1 and RF-2. It binds guanine nucleotides and has strong preference for UGA stop codons. It may interact directly with the ribosome. The stimulation of RF-1 and RF-2 is significantly reduced by GTP and GDP, but not by GMP. The chain is Peptide chain release factor 3 from Francisella tularensis subsp. tularensis (strain WY96-3418).